Reading from the N-terminus, the 546-residue chain is Putative serine hydroxymethyltransferase, mitochondrial (546 aa).

The N-terminal 64 residues, 1–64 (MSSFQSTAAV…RFSSSSIAND (64 aa)), are a transit peptide targeting the mitochondrion. Lysine 305 bears the N6-(pyridoxal phosphate)lysine mark.

The protein belongs to the SHMT family. Homotetramer. Pyridoxal 5'-phosphate is required as a cofactor.

The protein localises to the mitochondrion. It carries out the reaction (6R)-5,10-methylene-5,6,7,8-tetrahydrofolate + glycine + H2O = (6S)-5,6,7,8-tetrahydrofolate + L-serine. Its pathway is one-carbon metabolism; tetrahydrofolate interconversion. In terms of biological role, interconversion of serine and glycine. The chain is Putative serine hydroxymethyltransferase, mitochondrial (cbs-2) from Neurospora crassa (strain ATCC 24698 / 74-OR23-1A / CBS 708.71 / DSM 1257 / FGSC 987).